A 461-amino-acid chain; its full sequence is Propanal dehydrogenase (CoA-propanoylating) (461 aa).

The targets protein to the BMC stretch occupies residues 1 to 18 (MNTSELETLIRNILSEQL).

This sequence belongs to the EutE/PduP family. Interacts with PduK, probably with its BMC-containing N-terminus. Interacts with shell proteins PduA and PduJ, interacts with PduQ.

Its subcellular location is the bacterial microcompartment. It carries out the reaction propanal + NAD(+) + CoA = propanoyl-CoA + NADH + H(+). The protein operates within polyol metabolism; 1,2-propanediol degradation. In terms of biological role, a CoA-acylating aldehyde dehydrogenase required for optimal 1,2-propanediol (1,2-PD) degradation. Optimizes growth in the bacterial microcompartment (BMC) dedicated to 1,2-PD degradation by minimizing propionaldehyde toxicity. NAD(+) and NADH are regenerated internally within the Pdu BMC by the PduP and PduQ enzymes, which reduce NAD(+) and oxidize NADH respectively, although there must also be cofactor transport across the BMC. Directly targeted to the BMC. Its function is as follows. Expression of a cosmid containing the full 21-gene pdu operon in E.coli allows E.coli to grow on 1,2-propanediol (1,2-PD) with the appearance of bacterial microcompartments (BMC) in its cytoplasm. The 1,2-PD-specific bacterial microcompartment (BMC) concentrates low levels of 1,2-PD catabolic enzymes, concentrates volatile reaction intermediates thus enhancing pathway flux and keeps the level of toxic, mutagenic propionaldehyde low. The protein is Propanal dehydrogenase (CoA-propanoylating) of Citrobacter freundii.